We begin with the raw amino-acid sequence, 418 residues long: Serine hydroxymethyltransferase (418 aa).

Residues Leu-118 and 122 to 124 each bind (6S)-5,6,7,8-tetrahydrofolate; that span reads GHL. Lys-227 is modified (N6-(pyridoxal phosphate)lysine). Glu-242 lines the (6S)-5,6,7,8-tetrahydrofolate pocket.

The protein belongs to the SHMT family. Homodimer. Requires pyridoxal 5'-phosphate as cofactor.

Its subcellular location is the cytoplasm. It carries out the reaction (6R)-5,10-methylene-5,6,7,8-tetrahydrofolate + glycine + H2O = (6S)-5,6,7,8-tetrahydrofolate + L-serine. The protein operates within one-carbon metabolism; tetrahydrofolate interconversion. It functions in the pathway amino-acid biosynthesis; glycine biosynthesis; glycine from L-serine: step 1/1. Catalyzes the reversible interconversion of serine and glycine with tetrahydrofolate (THF) serving as the one-carbon carrier. This reaction serves as the major source of one-carbon groups required for the biosynthesis of purines, thymidylate, methionine, and other important biomolecules. Also exhibits THF-independent aldolase activity toward beta-hydroxyamino acids, producing glycine and aldehydes, via a retro-aldol mechanism. This is Serine hydroxymethyltransferase from Chloroflexus aggregans (strain MD-66 / DSM 9485).